The sequence spans 720 residues: MPLRNLTETHNFSSTNLDTDGTGDDHDGAPLSSSPSFGQQNDNSTNDNAGLTNPFMGSDEESNARDGESLSSSVHYQPQGSDSSLLHDNSRLDLSQNKGVSDYKGYYSRNNSRAVSTANDNSFLQPPHRAIASSPSLNSNLSKNDILSPPEFDRYPLVGSRVTSMTQLNHHGRSPTSSPGNESSASFSSNPFLGEQDFSPFGGYPASSFPLMIDEKEEDDYLHNPDPEEEARLDRRRFIDDFKYMDKRSASGLAGVLLLFLAAIFIFIVLPALTFTGAIDHESNTEEVTYLTQYQYPQLSAIRTSLVDPDTPDTAKTREAMDGSKWELVFSDEFNAEGRTFYDGDDPYWTAPDVHYDATKDLEWYSPDASTTVNGTLQLRMDAFKNHGLYYRSGMLQSWNKVCFTQGALEISANLPNYGRVSGLWPGLWTMGNLGRPGYLASTQGVWPYSYESCDAGITPNQSSPDGISYLPGQKLSICTCDGEDHPNQGVGRGAPEIDVLEGETDTKIGVGIASQSLQIAPFDIWYMPDYDFIEVYNFTTTTMNTYAGGPFQQAVSAVSTLNVTWYEFGEYGGYFQKYAIEYLNDDDNGYIRWFVGDTPTYTIHAKALHPDGNIGWRRISKEPMSIILNLGISNNWAYIDWQYIFFPVVMSIDYVRIYQPSNAISVTCDPSDYPTYDYIQSHLNAFQNANLTTWEDAGYTFPKNILTGKCTSSKFKLSS.

Polar residues-rich tracts occupy residues 1 to 17, 31 to 51, and 69 to 90; these read MPLRNLTETHNFSSTNL, LSSSPSFGQQNDNSTNDNAGL, and SLSSSVHYQPQGSDSSLLHDNS. Residues 1-90 are disordered; sequence MPLRNLTETH…SDSSLLHDNS (90 aa). Topologically, residues 1 to 252 are cytoplasmic; sequence MPLRNLTETH…KYMDKRSASG (252 aa). Phosphoserine occurs at positions 81, 116, 133, 134, 136, and 139. Disordered regions lie at residues 117 to 142 and 167 to 189; these read TANDNSFLQPPHRAIASSPSLNSNLS and QLNHHGRSPTSSPGNESSASFSS. A compositionally biased stretch (low complexity) spans 133–142; sequence SSPSLNSNLS. The chain crosses the membrane as a helical; Signal-anchor for type II membrane protein span at residues 253-273; it reads LAGVLLLFLAAIFIFIVLPAL. Residues 274-720 lie on the Lumenal side of the membrane; sequence TFTGAIDHES…CTSSKFKLSS (447 aa). A GH16 domain is found at 289–664; the sequence is TYLTQYQYPQ…YVRIYQPSNA (376 aa). N-linked (GlcNAc...) asparagine glycosylation is found at Asn-374, Asn-461, Asn-538, Asn-563, and Asn-691.

The protein belongs to the SKN1/KRE6 family. As to quaternary structure, the cytoplasmic domain interacts with the actin patch assembly proteins LAS17 and SLA1. Interacts with KEG1.

The protein resides in the golgi apparatus membrane. Its function is as follows. Involved in the synthesis of (1-&gt;6)- and (1-&gt;3)-beta-D-glucan polymers of the yeast cell wall in vivo. It is required for full activity of beta-glucan synthase in vitro. May be involved in the maturation and transport of cell wall proteins (CWP) to the cell wall. May act as a transglucosidase and contribute to the construction of a protein-bound glucan-structure that acts as an acceptor site for the addition of (1-&gt;6)-beta-D-glucan at the cell surface. This chain is Beta-glucan synthesis-associated protein KRE6 (KRE6), found in Saccharomyces cerevisiae (strain ATCC 204508 / S288c) (Baker's yeast).